The following is a 732-amino-acid chain: 1,4-alpha-glucan branching enzyme GlgB 1 (732 aa).

The active-site Nucleophile is aspartate 411. The Proton donor role is filled by glutamate 464.

The protein belongs to the glycosyl hydrolase 13 family. GlgB subfamily. In terms of assembly, monomer.

It catalyses the reaction Transfers a segment of a (1-&gt;4)-alpha-D-glucan chain to a primary hydroxy group in a similar glucan chain.. It functions in the pathway glycan biosynthesis; glycogen biosynthesis. Functionally, catalyzes the formation of the alpha-1,6-glucosidic linkages in glycogen by scission of a 1,4-alpha-linked oligosaccharide from growing alpha-1,4-glucan chains and the subsequent attachment of the oligosaccharide to the alpha-1,6 position. The polypeptide is 1,4-alpha-glucan branching enzyme GlgB 1 (Xanthomonas oryzae pv. oryzae (strain KACC10331 / KXO85)).